A 140-amino-acid polypeptide reads, in one-letter code: Nucleoside diphosphate kinase (140 aa).

Residues Lys-11, Phe-59, Arg-87, Thr-93, Arg-104, and Asn-114 each contribute to the ATP site. His-117 serves as the catalytic Pros-phosphohistidine intermediate.

Belongs to the NDK family. In terms of assembly, homotetramer. Mg(2+) serves as cofactor.

It localises to the cytoplasm. It catalyses the reaction a 2'-deoxyribonucleoside 5'-diphosphate + ATP = a 2'-deoxyribonucleoside 5'-triphosphate + ADP. It carries out the reaction a ribonucleoside 5'-diphosphate + ATP = a ribonucleoside 5'-triphosphate + ADP. Its function is as follows. Major role in the synthesis of nucleoside triphosphates other than ATP. The ATP gamma phosphate is transferred to the NDP beta phosphate via a ping-pong mechanism, using a phosphorylated active-site intermediate. This chain is Nucleoside diphosphate kinase, found in Ruegeria pomeroyi (strain ATCC 700808 / DSM 15171 / DSS-3) (Silicibacter pomeroyi).